The chain runs to 227 residues: Type II restriction enzyme HhaII (227 aa).

As to quaternary structure, homodimer.

The enzyme catalyses Endonucleolytic cleavage of DNA to give specific double-stranded fragments with terminal 5'-phosphates.. Functionally, a P subtype restriction enzyme that recognizes the double-stranded sequence 5'-GANTC-3' and cleaves after G-1. This chain is Type II restriction enzyme HhaII (hhaIIR), found in Haemophilus parahaemolyticus.